A 329-amino-acid polypeptide reads, in one-letter code: Myoblast determination protein 1 homolog (329 aa).

Residues 160 to 211 (DRRKAATMRERRRLRKVNEAFEVVKQRTCPNPNQRLPKVEILRSAIDYINTL) form the bHLH domain. A disordered region spans residues 256–279 (NPDGPNVYDDEDLSDTDEDRDHHH). Acidic residues predominate over residues 263–273 (YDDEDLSDTDE).

As to quaternary structure, efficient DNA binding requires dimerization with another bHLH protein. In terms of tissue distribution, body wall muscle cells; in clonal muscle precursors, in a set of early embryonic blastomeres (the ms-granddaughters), and in six glial-like cells called GLRS.

The protein localises to the nucleus. Accumulation defines the body wall muscle cell fate during embryogenesis. The protein is Myoblast determination protein 1 homolog (hlh-1) of Caenorhabditis briggsae.